A 73-amino-acid polypeptide reads, in one-letter code: Putative defensin-like protein 57 (73 aa).

A signal peptide spans 1–25 (MRFTSMIFVLVVILINSLFNFNVLA). 4 disulfide bridges follow: cysteine 37–cysteine 71, cysteine 41–cysteine 64, cysteine 50–cysteine 69, and cysteine 54–cysteine 70.

It belongs to the DEFL family.

It is found in the secreted. The protein is Putative defensin-like protein 57 of Arabidopsis thaliana (Mouse-ear cress).